We begin with the raw amino-acid sequence, 164 residues long: Lipoprotein signal peptidase (164 aa).

Helical transmembrane passes span 12-32 (WLWLVVVVLIIDLGSKYLILQ), 70-90 (WFFAGIAIGISVILAVMMYRS), and 102-122 (ALIIGGALGNLFDRLWHGFVV). Catalysis depends on residues Asp-123 and Asp-141. Residues 137-157 (FNLADTAICVGAALIVLEGFL) form a helical membrane-spanning segment.

The protein belongs to the peptidase A8 family.

Its subcellular location is the cell inner membrane. The catalysed reaction is Release of signal peptides from bacterial membrane prolipoproteins. Hydrolyzes -Xaa-Yaa-Zaa-|-(S,diacylglyceryl)Cys-, in which Xaa is hydrophobic (preferably Leu), and Yaa (Ala or Ser) and Zaa (Gly or Ala) have small, neutral side chains.. It participates in protein modification; lipoprotein biosynthesis (signal peptide cleavage). In terms of biological role, this protein specifically catalyzes the removal of signal peptides from prolipoproteins. The sequence is that of Lipoprotein signal peptidase from Escherichia coli O9:H4 (strain HS).